Here is a 203-residue protein sequence, read N- to C-terminus: Ras-like protein family member 10B (203 aa).

The tract at residues 1–203 (MVSTYRVAVL…ALRRNRCAIM (203 aa)) is small GTPase-like. GTP is bound at residue 11 to 18 (GARGVGKS). Residues 33-42 (CVPTTARRLY) carry the Effector region motif. GTP is bound by residues 59-62 (DFPP) and 128-131 (NKRD). A Cysteine methyl ester modification is found at Cys200. Cys200 is lipidated: S-geranylgeranyl cysteine. The propeptide at 201–203 (AIM) is removed in mature form.

It belongs to the small GTPase superfamily. Ras family. In terms of assembly, interacts with CADPS. Expressed at high levels in skeletal muscle and, at much lower levels, in heart, brain and pancreas.

Its subcellular location is the cell membrane. It catalyses the reaction GTP + H2O = GDP + phosphate + H(+). In terms of biological role, may facilitate the release of atrial natriuretic peptide by cardiomyocytes and hence play a role in the regulation of arterial pressure. The polypeptide is Ras-like protein family member 10B (RASL10B) (Homo sapiens (Human)).